We begin with the raw amino-acid sequence, 282 residues long: Putative 4-diphosphocytidyl-2-C-methyl-D-erythritol kinase (282 aa).

Residue lysine 9 is part of the active site. 93–103 (PVSAGLAGGST) lines the ATP pocket. Aspartate 135 is a catalytic residue.

It belongs to the GHMP kinase family. IspE subfamily.

The catalysed reaction is 4-CDP-2-C-methyl-D-erythritol + ATP = 4-CDP-2-C-methyl-D-erythritol 2-phosphate + ADP + H(+). Catalyzes the phosphorylation of the position 2 hydroxy group of 4-diphosphocytidyl-2C-methyl-D-erythritol. The polypeptide is Putative 4-diphosphocytidyl-2-C-methyl-D-erythritol kinase (Staphylococcus saprophyticus subsp. saprophyticus (strain ATCC 15305 / DSM 20229 / NCIMB 8711 / NCTC 7292 / S-41)).